The following is an 891-amino-acid chain: Alanine--tRNA ligase (891 aa).

Residues H564, H568, C677, and H681 each contribute to the Zn(2+) site.

It belongs to the class-II aminoacyl-tRNA synthetase family. Zn(2+) serves as cofactor.

It is found in the cytoplasm. It catalyses the reaction tRNA(Ala) + L-alanine + ATP = L-alanyl-tRNA(Ala) + AMP + diphosphate. Its function is as follows. Catalyzes the attachment of alanine to tRNA(Ala) in a two-step reaction: alanine is first activated by ATP to form Ala-AMP and then transferred to the acceptor end of tRNA(Ala). Also edits incorrectly charged Ser-tRNA(Ala) and Gly-tRNA(Ala) via its editing domain. The chain is Alanine--tRNA ligase from Rhodopseudomonas palustris (strain HaA2).